Consider the following 339-residue polypeptide: Ubiquitin carboxyl-terminal hydrolase 50 (339 aa).

The region spanning 44–339 (TGLWNLGNTC…AFCKNSVTQA (296 aa)) is the USP domain. The active-site Nucleophile is the cysteine 53. The Proton acceptor role is filled by histidine 327.

The protein belongs to the peptidase C19 family. As to expression, weakly expressed in a few tissues.

It localises to the cytoplasm. The protein resides in the cytoskeleton. The protein localises to the microtubule organizing center. Its subcellular location is the centrosome. It is found in the nucleus. It carries out the reaction Thiol-dependent hydrolysis of ester, thioester, amide, peptide and isopeptide bonds formed by the C-terminal Gly of ubiquitin (a 76-residue protein attached to proteins as an intracellular targeting signal).. Functionally, deubiquitinating enzyme that removes conjugated ubiquitin from specific proteins to regulate different cellular processes. Regulates the inflammasome signaling pathway by deubiquitinating 'Lys-63'-linked polyubiquitination of the PYCARD/ASC adapter protein. Regulates the ubiquitination and stability of the ACE2 protein. Acts as a negative regulator of the G2/M checkpoint pathway, by preventing serine/threonine kinase WEE1 degradation, thereby repressing entry into mitosis following activation of the G2/M DNA damage checkpoint. This Homo sapiens (Human) protein is Ubiquitin carboxyl-terminal hydrolase 50.